Reading from the N-terminus, the 63-residue chain is Large ribosomal subunit protein uL29 (63 aa).

This sequence belongs to the universal ribosomal protein uL29 family.

The polypeptide is Large ribosomal subunit protein uL29 (Haemophilus ducreyi (strain 35000HP / ATCC 700724)).